Here is a 631-residue protein sequence, read N- to C-terminus: Phosphomethylpyrimidine synthase (631 aa).

Substrate contacts are provided by residues asparagine 239, methionine 268, tyrosine 297, histidine 333, 353-355, 394-397, and glutamate 433; these read SRG and DGLR. Zn(2+) is bound at residue histidine 437. Tyrosine 460 is a binding site for substrate. Residue histidine 501 participates in Zn(2+) binding. Cysteine 581, cysteine 584, and cysteine 589 together coordinate [4Fe-4S] cluster.

This sequence belongs to the ThiC family. Homodimer. [4Fe-4S] cluster serves as cofactor.

The enzyme catalyses 5-amino-1-(5-phospho-beta-D-ribosyl)imidazole + S-adenosyl-L-methionine = 4-amino-2-methyl-5-(phosphooxymethyl)pyrimidine + CO + 5'-deoxyadenosine + formate + L-methionine + 3 H(+). Its pathway is cofactor biosynthesis; thiamine diphosphate biosynthesis. Functionally, catalyzes the synthesis of the hydroxymethylpyrimidine phosphate (HMP-P) moiety of thiamine from aminoimidazole ribotide (AIR) in a radical S-adenosyl-L-methionine (SAM)-dependent reaction. The protein is Phosphomethylpyrimidine synthase of Salmonella agona (strain SL483).